A 385-amino-acid polypeptide reads, in one-letter code: UPF0744 protein YSD83 (385 aa).

This sequence belongs to the UPF0744 family.

The protein is UPF0744 protein YSD83 (YSD83) of Saccharomyces paradoxus (Yeast).